The chain runs to 311 residues: tRNA dimethylallyltransferase (311 aa).

Residue 11–18 (GPTASGKS) coordinates ATP. 13–18 (TASGKS) provides a ligand contact to substrate. Interaction with substrate tRNA regions lie at residues 36–39 (DSMQ) and 160–164 (QRLIR).

It belongs to the IPP transferase family. As to quaternary structure, monomer. Mg(2+) serves as cofactor.

The catalysed reaction is adenosine(37) in tRNA + dimethylallyl diphosphate = N(6)-dimethylallyladenosine(37) in tRNA + diphosphate. Catalyzes the transfer of a dimethylallyl group onto the adenine at position 37 in tRNAs that read codons beginning with uridine, leading to the formation of N6-(dimethylallyl)adenosine (i(6)A). The chain is tRNA dimethylallyltransferase from Rickettsia typhi (strain ATCC VR-144 / Wilmington).